We begin with the raw amino-acid sequence, 208 residues long: 3-isopropylmalate dehydratase small subunit 2 (208 aa).

Belongs to the LeuD family. LeuD type 1 subfamily. As to quaternary structure, heterodimer of LeuC and LeuD.

The enzyme catalyses (2R,3S)-3-isopropylmalate = (2S)-2-isopropylmalate. The protein operates within amino-acid biosynthesis; L-leucine biosynthesis; L-leucine from 3-methyl-2-oxobutanoate: step 2/4. Catalyzes the isomerization between 2-isopropylmalate and 3-isopropylmalate, via the formation of 2-isopropylmaleate. This Salmonella choleraesuis (strain SC-B67) protein is 3-isopropylmalate dehydratase small subunit 2.